The chain runs to 120 residues: Methylglyoxal synthase (120 aa).

The 120-residue stretch at M1 to L120 folds into the MGS-like domain. Substrate-binding positions include H8, K12, and S54–G55. The active-site Proton donor/acceptor is the D60. H87 contributes to the substrate binding site.

This sequence belongs to the methylglyoxal synthase family.

It catalyses the reaction dihydroxyacetone phosphate = methylglyoxal + phosphate. Its function is as follows. Catalyzes the formation of methylglyoxal from dihydroxyacetone phosphate. This Natranaerobius thermophilus (strain ATCC BAA-1301 / DSM 18059 / JW/NM-WN-LF) protein is Methylglyoxal synthase.